A 319-amino-acid polypeptide reads, in one-letter code: uncharacterized protein (319 aa).

The segment covering 268–312 (SSVVAVTHPPSTTSTTTSVSETLSSFIAPSDLSSQPSPSSHPSSP) has biased composition (low complexity). The disordered stretch occupies residues 268–319 (SSVVAVTHPPSTTSTTTSVSETLSSFIAPSDLSSQPSPSSHPSSPFGNHNEF).

This is an uncharacterized protein from Lepidoptera (butterflies and moths).